The primary structure comprises 1000 residues: Receptor-type tyrosine-protein kinase FLT3 (1000 aa).

An N-terminal signal peptide occupies residues 1–27 (MRALAQRSDRRLLLLVVLSVMILETVT). At 28 to 544 (NQDLPVIKCV…PFPFIQDNIS (517 aa)) the chain is on the extracellular side. 2 cysteine pairs are disulfide-bonded: cysteine 36-cysteine 66 and cysteine 104-cysteine 115. Asparagine 44 carries N-linked (GlcNAc...) asparagine glycosylation. Residues 45-67 (GSSAGKPSSYRMVRGSPEDLQCT) form a disordered region. N-linked (GlcNAc...) asparagine glycosylation is found at asparagine 133 and asparagine 152. 2 disulfide bridges follow: cysteine 200–cysteine 207 and cysteine 273–cysteine 331. One can recognise an Ig-like C2-type domain in the interval 254–344 (PQSTLPQLFL…KHPSQSALVT (91 aa)). Asparagine 307, asparagine 324, and asparagine 352 each carry an N-linked (GlcNAc...) asparagine glycan. Disulfide bonds link cysteine 369-cysteine 408 and cysteine 382-cysteine 393. 4 N-linked (GlcNAc...) asparagine glycosylation sites follow: asparagine 445, asparagine 474, asparagine 503, and asparagine 542. Residues 545–564 (FYATIGLCLPFIVVLIVLIC) traverse the membrane as a helical segment. Residues 565–992 (HKYKKQFRYE…GSEPPSPQAQ (428 aa)) are Cytoplasmic-facing. Tyrosine 573 carries the phosphotyrosine modification. Serine 575 bears the Phosphoserine mark. Tyrosine 590 and tyrosine 592 each carry phosphotyrosine; by autocatalysis. The tract at residues 592–598 (YVDFRDY) is important for normal regulation of the kinase activity and for maintaining the kinase in an inactive state in the absence of ligand binding. Tyrosine 600 carries the post-translational modification Phosphotyrosine. One can recognise a Protein kinase domain in the interval 611 to 946 (LEFGKVLGSG…PSFPNLTSFL (336 aa)). ATP-binding positions include 617–625 (LGSGAFGRV) and lysine 645. Tyrosine 727 is subject to Phosphotyrosine; by autocatalysis. Serine 760 carries the phosphoserine modification. A phosphotyrosine mark is found at tyrosine 769 and tyrosine 796. Catalysis depends on aspartate 814, which acts as the Proton acceptor. Tyrosine 845 is modified (phosphotyrosine; by autocatalysis). A phosphotyrosine mark is found at tyrosine 958 and tyrosine 972. The disordered stretch occupies residues 968–1000 (HPSIYQNRRPLSREAGSEPPSPQAQVKIHRERS). The residue at position 1000 (serine 1000) is a Phosphoserine.

The protein belongs to the protein kinase superfamily. Tyr protein kinase family. CSF-1/PDGF receptor subfamily. Monomer in the absence of bound FLT3LG. Homodimer in the presence of bound FLT3LG. Interacts with FIZ1 following ligand activation. Interacts with FES, FER, LYN, FGR, HCK, SRC and GRB2. Interacts with PTPRJ/DEP-1 and PTPN11/SHP2. Interacts with RNF115 and RNF126. N-glycosylated, contains complex N-glycans with sialic acid. Post-translationally, autophosphorylated on several tyrosine residues in response to FLT3LG binding. FLT3LG binding also increases phosphorylation of mutant kinases that are constitutively activated. Dephosphorylated by PTPRJ/DEP-1, PTPN1, PTPN6/SHP-1, and to a lesser degree by PTPN12. Dephosphorylation is important for export from the endoplasmic reticulum and location at the cell membrane. In terms of processing, rapidly ubiquitinated by UBE2L6 and the E3 ubiquitin-protein ligase SIAH1 after autophosphorylation, leading to its proteasomal degradation. Hematopoietic stem and progenitor cell-enriched populations. Found in brain, placenta and testis.

The protein resides in the membrane. It is found in the endoplasmic reticulum lumen. It carries out the reaction L-tyrosyl-[protein] + ATP = O-phospho-L-tyrosyl-[protein] + ADP + H(+). Present in an inactive conformation in the absence of bound ligand. FLT3LG binding leads to dimerization and activation by autophosphorylation. In terms of biological role, tyrosine-protein kinase that acts as a cell-surface receptor for the cytokine FLT3LG and regulates differentiation, proliferation and survival of hematopoietic progenitor cells and of dendritic cells. Promotes phosphorylation of SHC1 and AKT1, and activation of the downstream effector MTOR. Promotes activation of RAS signaling and phosphorylation of downstream kinases, including MAPK1/ERK2 and/or MAPK3/ERK1. Promotes phosphorylation of FES, FER, PTPN6/SHP, PTPN11/SHP-2, PLCG1, and STAT5A and/or STAT5B. Activation of wild-type FLT3 causes only marginal activation of STAT5A or STAT5B. Mutations that cause constitutive kinase activity promote cell proliferation and resistance to apoptosis via the activation of multiple signaling pathways. In Mus musculus (Mouse), this protein is Receptor-type tyrosine-protein kinase FLT3 (Flt3).